The primary structure comprises 233 residues: Phosphoribosylformylglycinamidine synthase subunit PurQ (233 aa).

The Glutamine amidotransferase type-1 domain occupies 3-233 (SAVLVFPGIN…GLVEHLKTAA (231 aa)). The Nucleophile role is filled by Cys87. Residues His204 and Glu206 contribute to the active site.

Part of the FGAM synthase complex composed of 1 PurL, 1 PurQ and 2 PurS subunits.

It is found in the cytoplasm. It carries out the reaction N(2)-formyl-N(1)-(5-phospho-beta-D-ribosyl)glycinamide + L-glutamine + ATP + H2O = 2-formamido-N(1)-(5-O-phospho-beta-D-ribosyl)acetamidine + L-glutamate + ADP + phosphate + H(+). The catalysed reaction is L-glutamine + H2O = L-glutamate + NH4(+). Its pathway is purine metabolism; IMP biosynthesis via de novo pathway; 5-amino-1-(5-phospho-D-ribosyl)imidazole from N(2)-formyl-N(1)-(5-phospho-D-ribosyl)glycinamide: step 1/2. Functionally, part of the phosphoribosylformylglycinamidine synthase complex involved in the purines biosynthetic pathway. Catalyzes the ATP-dependent conversion of formylglycinamide ribonucleotide (FGAR) and glutamine to yield formylglycinamidine ribonucleotide (FGAM) and glutamate. The FGAM synthase complex is composed of three subunits. PurQ produces an ammonia molecule by converting glutamine to glutamate. PurL transfers the ammonia molecule to FGAR to form FGAM in an ATP-dependent manner. PurS interacts with PurQ and PurL and is thought to assist in the transfer of the ammonia molecule from PurQ to PurL. This Rhodopseudomonas palustris (strain HaA2) protein is Phosphoribosylformylglycinamidine synthase subunit PurQ.